Reading from the N-terminus, the 41-residue chain is FDGRNAAVNERAPWMVVTATTNCCGYTGPACHPCLCTQSCG.

Residues 1–11 constitute a propeptide that is removed on maturation; sequence FDGRNAAVNER. Proline 13 carries the 4-hydroxyproline modification. O-linked (HexNAc...) threonine glycosylation is found at threonine 18 and threonine 20. Proline 29 and proline 33 each carry 4-hydroxyproline. Position 40 is a cysteine amide (cysteine 40).

This sequence belongs to the conotoxin A superfamily. Contains 3 disulfide bonds. Expressed by the venom duct.

It is found in the secreted. Its function is as follows. Probable neurotoxin with ion channel inhibitor activity. In Conus achatinus (Little frog cone), this protein is Conotoxin Ac4.2.